Reading from the N-terminus, the 91-residue chain is Large ribosomal subunit protein uL23 (91 aa).

This sequence belongs to the universal ribosomal protein uL23 family. Part of the 50S ribosomal subunit. Contacts protein L29, and trigger factor when it is bound to the ribosome.

One of the early assembly proteins it binds 23S rRNA. One of the proteins that surrounds the polypeptide exit tunnel on the outside of the ribosome. Forms the main docking site for trigger factor binding to the ribosome. The sequence is that of Large ribosomal subunit protein uL23 from Staphylococcus saprophyticus subsp. saprophyticus (strain ATCC 15305 / DSM 20229 / NCIMB 8711 / NCTC 7292 / S-41).